We begin with the raw amino-acid sequence, 144 residues long: Short-chain diamines transporter (144 aa).

Transmembrane regions (helical) follow at residues isoleucine 9–isoleucine 29, glutamate 35–phenylalanine 55, isoleucine 76–tyrosine 96, and isoleucine 103–phenylalanine 123.

This sequence belongs to the proteobacterial antimicrobial compound efflux (PACE) (TC 2.A.117) family. In terms of assembly, exists in a monomer-homodimer equilibrium. The dimer is probably the functional form of the protein, and the assembly of the dimer is mediated by binding of chlorhexidine and promoted by high pH conditions.

Its subcellular location is the cell inner membrane. With respect to regulation, protonation/deprotonation of Glu-15 may play an important role in transporter function. Cadaverin transport is inhibited in the presence of CCCP. Mediates the efflux of short-chain diamines when energized by an electrochemical gradient. Recognizes specifically the short-chain diamines cadaverine and putrescine as substrates, and promotes the active transport of these substrates in exchange for a cation. Protons are probably the primary source of energy for transport, however it was not possible to conclude with complete certainty that protons, rather than alternative cations such as Na(+) ions, are exchanged for substrates by AceI. In addition, is involved in resistance to the synthetic biocide chlorhexidine, a widely used antiseptic and disinfectant in both hospital and community settings. Interacts directly with chlorhexidine and mediates its efflux via an energy-dependent mechanism. In Acinetobacter baumannii (strain ATCC 17978 / DSM 105126 / CIP 53.77 / LMG 1025 / NCDC KC755 / 5377), this protein is Short-chain diamines transporter.